A 197-amino-acid polypeptide reads, in one-letter code: Guanylate kinase (197 aa).

Residues 7-185 (GLIIILSSPS…TLKKIHEIIV (179 aa)) enclose the Guanylate kinase-like domain. 14–21 (SPSGTGKS) serves as a coordination point for ATP.

This sequence belongs to the guanylate kinase family.

It is found in the cytoplasm. The catalysed reaction is GMP + ATP = GDP + ADP. In terms of biological role, essential for recycling GMP and indirectly, cGMP. In Rickettsia prowazekii (strain Madrid E), this protein is Guanylate kinase (gmk).